A 261-amino-acid polypeptide reads, in one-letter code: Ribonuclease HII (261 aa).

An RNase H type-2 domain is found at Lys-71 to Ser-259. A divalent metal cation is bound by residues Asp-77, Glu-78, and Asp-169.

This sequence belongs to the RNase HII family. Mn(2+) serves as cofactor. It depends on Mg(2+) as a cofactor.

It localises to the cytoplasm. It catalyses the reaction Endonucleolytic cleavage to 5'-phosphomonoester.. Its function is as follows. Endonuclease that specifically degrades the RNA of RNA-DNA hybrids. In Listeria monocytogenes serovar 1/2a (strain ATCC BAA-679 / EGD-e), this protein is Ribonuclease HII.